A 349-amino-acid polypeptide reads, in one-letter code: Small ribosomal subunit protein uS2 (349 aa).

The protein belongs to the universal ribosomal protein uS2 family.

This chain is Small ribosomal subunit protein uS2, found in Methylobacterium nodulans (strain LMG 21967 / CNCM I-2342 / ORS 2060).